The sequence spans 78 residues: DNA-directed RNA polymerase subunit Rpo5 (78 aa).

Belongs to the archaeal Rpo5/eukaryotic RPB5 RNA polymerase subunit family. As to quaternary structure, part of the RNA polymerase complex.

It localises to the cytoplasm. The catalysed reaction is RNA(n) + a ribonucleoside 5'-triphosphate = RNA(n+1) + diphosphate. Its function is as follows. DNA-dependent RNA polymerase (RNAP) catalyzes the transcription of DNA into RNA using the four ribonucleoside triphosphates as substrates. This is DNA-directed RNA polymerase subunit Rpo5 from Methanococcus maripaludis (strain C7 / ATCC BAA-1331).